The following is a 142-amino-acid chain: MNFKYIVAVSFLITSGYAESVKNDEQSLSQRDVLEEESLREIRGIGGALLSVGKSALKGLAKGFAEHFGKRSAEDHEVMKRLEAVIRDLDSLDHPEEASERETRGFNQEEIANLFTKKEKRILGPVLGLVGSALGGLIKKIG.

The signal sequence occupies residues 1–18 (MNFKYIVAVSFLITSGYA). A propeptide spanning residues 19–43 (ESVKNDEQSLSQRDVLEEESLREIR) is cleaved from the precursor. Phenylalanine amide is present on phenylalanine 68. The propeptide occupies 72-121 (SAEDHEVMKRLEAVIRDLDSLDHPEEASERETRGFNQEEIANLFTKKEKR). Isoleucine 141 is modified (isoleucine amide).

It belongs to the bombinin family. As to expression, expressed by the skin glands.

The protein resides in the secreted. Functionally, maximin-y shows antimicrobial activity against bacteria and against the fungus C.albicans. It has little hemolytic activity. In terms of biological role, maximin-H11 shows antimicrobial activity against bacteria and against the fungus C.albicans. Shows strong hemolytic activity. This chain is Maximins y/H11, found in Bombina maxima (Giant fire-bellied toad).